The primary structure comprises 484 residues: Zinc metalloproteinase/disintegrin PMMP-2 (484 aa).

The N-terminal stretch at 1–20 (MIQVLLVTICLAVFPYQGSS) is a signal peptide. Residues 21-190 (IILESGNVDD…KASQLNLTPL (170 aa)) constitute a propeptide that is removed on maturation. Positions 197–395 (RYVKLAIVVD…YNPQCILNAP (199 aa)) constitute a Peptidase M12B domain. Asn239 carries an N-linked (GlcNAc...) asparagine glycan. Cystine bridges form between Cys308/Cys390, Cys352/Cys374, and Cys354/Cys357. Residue His333 coordinates Zn(2+). Glu334 is an active-site residue. Residues His337 and His343 each coordinate Zn(2+). The propeptide occupies 396-413 (LRTDTVSTPVSGNEFLEA). Residues 403–484 (TPVSGNEFLE…ADCPRNGLYG (82 aa)) form the Disintegrin domain. 6 cysteine pairs are disulfide-bonded: Cys417/Cys432, Cys419/Cys427, Cys426/Cys449, Cys440/Cys446, Cys445/Cys470, and Cys458/Cys477. Positions 462-464 (RGD) match the Cell attachment site motif.

This sequence belongs to the venom metalloproteinase (M12B) family. P-II subfamily. P-IIa sub-subfamily. Monomer. The cofactor is Zn(2+). In terms of tissue distribution, expressed by the venom gland.

It is found in the secreted. Its function is as follows. Impairs hemostasis in the envenomed animal. Inhibits platelet aggregation induced by ADP, thrombin, platelet-activating factor and collagen. Acts by inhibiting fibrinogen interaction with platelet receptors GPIIb/GPIIIa (ITGA2B/ITGB3). In Protobothrops mucrosquamatus (Taiwan habu), this protein is Zinc metalloproteinase/disintegrin PMMP-2.